Consider the following 767-residue polypeptide: Transducin-like enhancer protein 1 (767 aa).

Disordered regions lie at residues 1–26 and 200–346; these read MFPQNRPPTHLQASVATGAASGPPQS and ADAE…TSAS. 3 stretches are compositionally biased toward basic and acidic residues: residues 200-209, 235-255, and 277-289; these read ADAEHRERDP, RKTEEKDFGTDYGSDADRSED, and NGVDKPTLQRKDP. Residues 212 to 274 are CCN domain; that stretch reads SCLTLPNGER…SPHSVHSYSS (63 aa). Positions 294 to 306 are enriched in low complexity; sequence PNSMTSSSSVSPS. Residues 324–346 are compositionally biased toward polar residues; the sequence is LKSSTPNSQSDLNTPGPSGTSAS. WD repeat units follow at residues 467 to 498, 525 to 555, 569 to 599, 611 to 641, 693 to 723, and 734 to 764; these read GIPRHARQLHVLNHGEVVCAVTISNSTRHVYT, NRDNYIRSCKLLPDGRSLIVGGEASTLSIWD, SSAPACYALAISPDAKVCFSCCSDGNIVVWD, GHTDGASCIDISHDGTKLWTGGLDNTVRCWD, LHESCVLSLQFASCGKWFVSTGKDNLLNAWR, and KESSSVLSCDVSTDDQFIVTGSGDKKATVYE.

The protein belongs to the WD repeat Groucho/TLE family. In terms of processing, ubiquitinated by XIAP/BIRC4. Abundantly expressed in brain, lung, testis and ovary in comparison with liver, heart, kidney and spleen. Ubiquitously expressed in the developing embryo. Present in unfertilized and fertilized eggs.

It is found in the nucleus. In terms of biological role, nuclear effector molecule. The protein is Transducin-like enhancer protein 1 (esg1) of Xenopus laevis (African clawed frog).